We begin with the raw amino-acid sequence, 180 residues long: Large ribosomal subunit protein uL6 (180 aa).

The protein belongs to the universal ribosomal protein uL6 family. Part of the 50S ribosomal subunit.

This protein binds to the 23S rRNA, and is important in its secondary structure. It is located near the subunit interface in the base of the L7/L12 stalk, and near the tRNA binding site of the peptidyltransferase center. In Clostridium botulinum (strain 657 / Type Ba4), this protein is Large ribosomal subunit protein uL6.